A 367-amino-acid polypeptide reads, in one-letter code: Flagellar P-ring protein (367 aa).

A signal peptide spans 1–21; the sequence is MYVFKALAGIVLALVATLAHA.

This sequence belongs to the FlgI family. As to quaternary structure, the basal body constitutes a major portion of the flagellar organelle and consists of four rings (L,P,S, and M) mounted on a central rod.

Its subcellular location is the periplasm. The protein localises to the bacterial flagellum basal body. In terms of biological role, assembles around the rod to form the L-ring and probably protects the motor/basal body from shearing forces during rotation. The polypeptide is Flagellar P-ring protein (Salmonella arizonae (strain ATCC BAA-731 / CDC346-86 / RSK2980)).